A 160-amino-acid chain; its full sequence is Major pollen allergen Bet v 1-F/I (160 aa).

Brassinolide-binding residues include Lys-55, Tyr-82, Tyr-84, and Asn-101.

Belongs to the BetVI family.

It localises to the cytoplasm. Functionally, may be a general steroid carrier protein. This is Major pollen allergen Bet v 1-F/I (BETV1F) from Betula pendula (European white birch).